The chain runs to 174 residues: Small ribosomal subunit protein uS5 (174 aa).

The S5 DRBM domain occupies 16-79 (FSELIVSVRR…NAARKNMIRV (64 aa)).

This sequence belongs to the universal ribosomal protein uS5 family. As to quaternary structure, part of the 30S ribosomal subunit. Contacts proteins S4 and S8.

In terms of biological role, with S4 and S12 plays an important role in translational accuracy. Its function is as follows. Located at the back of the 30S subunit body where it stabilizes the conformation of the head with respect to the body. The sequence is that of Small ribosomal subunit protein uS5 from Ehrlichia ruminantium (strain Gardel).